The chain runs to 98 residues: Post-transcriptional regulator ComN (98 aa).

As to quaternary structure, interacts directly with DivIVA.

Its subcellular location is the cytoplasm. Its function is as follows. Required for post-transcription initiation control of the comE operon. Promotes the accumulation of its target comE mRNA to septal and polar sites. The chain is Post-transcriptional regulator ComN (comN) from Bacillus subtilis (strain 168).